The sequence spans 168 residues: DAZ-associated protein 2 (168 aa).

Low complexity predominate over residues 1 to 13 (MNSKGQYPTQPTY). Residues 1-25 (MNSKGQYPTQPTYPVQPPGNPVYPQ) form a disordered region. The short motif at 39–42 (PPAY) is the PPAY element. A Phosphoserine modification is found at serine 77.

As to quaternary structure, interacts with SOX6. Interacts with DAZ1 and DAZL. Interacts with IL17RB. May interact with FAM168B. Interacts with INCA1. Interacts with EIF4G1 and EIF4G2. Interacts (via PPAY motif) with NEDD4 (via WW domains). Interacts with transcription factor TCF4; the interaction results in localization of DAZAP2 to the nucleus. Interacts with transcription factors TCF7 and TCF7L1. Interacts with transcription factor LEF1. Interacts with serine/threonine-protein kinase HIPK2; the interaction results in phosphorylation of DAZAP2 which causes localization of DAZAP2 to the nucleus, reduces interaction of DAZAP2 with HIPK2 and prevents DAZAP2-dependent degradation of HIPK2. Interacts with ubiquitin ligase SIAH1; the interaction is decreased following phosphorylation of DAZAP2 by HIPK2. Interacts with TP53; the interaction is triggered by DNA damage. Ubiquitinated by SMURF2, leading to proteasomal degradation. Ubiquitinated by NEDD4, leading to proteasomal degradation. In terms of processing, following DNA damage, phosphorylated by HIPK2 which promotes DAZAP2 localization to the nucleus, reduces interaction of DAZAP2 with HIPK2 and SIAH1, and prevents DAZAP2-dependent ubiquitination of HIPK2 by E3 ubiquitin-protein ligase SIAH1 and subsequent HIPK2 proteasomal degradation. Widely expressed. Highly expressed in brain.

It localises to the cytoplasm. The protein resides in the nucleus. It is found in the nucleus speckle. The protein localises to the nuclear body. Its subcellular location is the stress granule. Functionally, in unstressed cells, promotes SIAH1-mediated polyubiquitination and degradation of the serine/threonine-protein kinase HIPK2, probably by acting as a loading factor that potentiates complex formation between HIPK2 and ubiquitin ligase SIAH1. In response to DNA damage, localizes to the nucleus following phosphorylation by HIPK2 and modulates the expression of a subset of TP53/p53 target genes by binding to TP53 at target gene promoters. This limits the expression of a number of cell death-mediating TP53 target genes, reducing DNA damage-induced cell death. Enhances the binding of transcription factor TCF7L2/TCF4, a Wnt signaling pathway effector, to the promoters of target genes. Plays a role in stress granule formation. This Mus musculus (Mouse) protein is DAZ-associated protein 2 (Dazap2).